The primary structure comprises 488 residues: Histamine H1 receptor (488 aa).

The Extracellular portion of the chain corresponds to 1-38 (MSFLPGMTPVTLSNFSWALEDRMLEGNSTTTPTRQLMP). N-linked (GlcNAc...) asparagine glycans are attached at residues Asn14 and Asn27. A helical membrane pass occupies residues 39 to 59 (LVVVLSSVSLVTVALNLLVLY). The Cytoplasmic segment spans residues 60 to 73 (AVRSERKLHTVGNL). The chain crosses the membrane as a helical span at residues 74-98 (YIVSLSVADLIVGAVVMPMSILYLH). Residues 99–106 (RSAWILGR) lie on the Extracellular side of the membrane. The helical transmembrane segment at 107-132 (PLCLFWLSMDYVASTASIFSVFILCI) threads the bilayer. Cys109 and Cys189 form a disulfide bridge. Histamine-binding residues include Asp116 and Thr121. The tract at residues 116–121 (DYVAST) is important for agonist binding. Residues 133-153 (DRYRSVQQPLRYLRYRTKTRA) are Cytoplasmic-facing. 2 positions are modified to phosphothreonine: Thr149 and Thr151. Residues 154-173 (SATILGAWLLSFLWVIPILG) form a helical membrane-spanning segment. At 174–197 (WHHFMAPTSEPREKKCETDFYDVT) the chain is on the extracellular side. Residues 198–220 (WFKVMTAIINFYLPTLLMLWFYI) form a helical membrane-spanning segment. A histamine-binding site is contributed by Asn207. Residues 221–417 (RIYKAVRRHC…LNRERKAAKQ (197 aa)) are Cytoplasmic-facing. Phosphoserine is present on Ser239. Over residues 259 to 274 (RMGKESPWEDPKRCSK) the composition is skewed to basic and acidic residues. Residues 259–285 (RMGKESPWEDPKRCSKDASGVHTPMPS) form a disordered region. 5 positions are modified to phosphoserine: Ser345, Ser381, Ser383, Ser397, and Ser399. Residues 418 to 441 (LGCIMAAFILCWIPYFVFFMVIAF) traverse the membrane as a helical segment. The segment at 425–429 (FILCW) is important for agonist binding. Tyr432 lines the histamine pocket. Cys442 and Cys445 are joined by a disulfide. Topologically, residues 442 to 447 (CKSCSN) are extracellular. The chain crosses the membrane as a helical span at residues 448–470 (EPVHMFTIWLGYLNSTLNPLIYP). Topologically, residues 471 to 488 (LCNENFRKTFKRILRIPP) are cytoplasmic.

Belongs to the G-protein coupled receptor 1 family. In terms of processing, phosphorylation at sites in the second and third cytoplasmic loops independently contribute to agonist-induced receptor down-regulation.

It is found in the cell membrane. In terms of biological role, G-protein-coupled receptor for histamine, a biogenic amine that functions as an immune modulator and a neurotransmitter. Through the H1 receptor, histamine mediates the contraction of smooth muscles and increases capillary permeability due to contraction of terminal venules. Also mediates neurotransmission in the central nervous system and thereby regulates circadian rhythms, emotional and locomotor activities as well as cognitive functions. This chain is Histamine H1 receptor, found in Cavia porcellus (Guinea pig).